The sequence spans 397 residues: 1-deoxy-D-xylulose 5-phosphate reductoisomerase (397 aa).

NADPH is bound by residues serine 10, glycine 11, serine 12, isoleucine 13, alanine 36, arginine 37, and asparagine 124. Residue lysine 125 coordinates 1-deoxy-D-xylulose 5-phosphate. Glutamate 126 contributes to the NADPH binding site. Position 150 (aspartate 150) interacts with Mn(2+). 1-deoxy-D-xylulose 5-phosphate contacts are provided by serine 151, glutamate 152, serine 186, and histidine 209. Glutamate 152 is a Mn(2+) binding site. NADPH is bound at residue glycine 215. Serine 222, asparagine 227, lysine 228, and glutamate 231 together coordinate 1-deoxy-D-xylulose 5-phosphate. Glutamate 231 contributes to the Mn(2+) binding site.

The protein belongs to the DXR family. The cofactor is Mg(2+). Mn(2+) serves as cofactor.

The enzyme catalyses 2-C-methyl-D-erythritol 4-phosphate + NADP(+) = 1-deoxy-D-xylulose 5-phosphate + NADPH + H(+). It functions in the pathway isoprenoid biosynthesis; isopentenyl diphosphate biosynthesis via DXP pathway; isopentenyl diphosphate from 1-deoxy-D-xylulose 5-phosphate: step 1/6. Functionally, catalyzes the NADPH-dependent rearrangement and reduction of 1-deoxy-D-xylulose-5-phosphate (DXP) to 2-C-methyl-D-erythritol 4-phosphate (MEP). This Aeromonas salmonicida (strain A449) protein is 1-deoxy-D-xylulose 5-phosphate reductoisomerase.